A 79-amino-acid chain; its full sequence is MATIQVRDLPEDVAETYRRRATAAGQSLQTYMRTKLIEGVRGRDKAEAIEILEQALASTASPGISRETIEASRRELRGG.

Antitoxin component of a possible type II toxin-antitoxin (TA) system. The cognate toxin is VapC1. This chain is Putative antitoxin VapB1 (vapB1), found in Mycobacterium tuberculosis (strain ATCC 25618 / H37Rv).